Here is a 438-residue protein sequence, read N- to C-terminus: UDP-N-acetylmuramoylalanine--D-glutamate ligase (438 aa).

ATP is bound at residue 112 to 118; the sequence is GSNGKST.

This sequence belongs to the MurCDEF family.

The protein resides in the cytoplasm. The enzyme catalyses UDP-N-acetyl-alpha-D-muramoyl-L-alanine + D-glutamate + ATP = UDP-N-acetyl-alpha-D-muramoyl-L-alanyl-D-glutamate + ADP + phosphate + H(+). Its pathway is cell wall biogenesis; peptidoglycan biosynthesis. In terms of biological role, cell wall formation. Catalyzes the addition of glutamate to the nucleotide precursor UDP-N-acetylmuramoyl-L-alanine (UMA). This Shigella boydii serotype 4 (strain Sb227) protein is UDP-N-acetylmuramoylalanine--D-glutamate ligase.